The following is a 180-amino-acid chain: Ribosome maturation factor RimM (180 aa).

The PRC barrel domain occupies 99 to 172 (EDEFYQVDLI…FLVVDPVAAG (74 aa)).

It belongs to the RimM family. Binds ribosomal protein uS19.

Its subcellular location is the cytoplasm. Functionally, an accessory protein needed during the final step in the assembly of 30S ribosomal subunit, possibly for assembly of the head region. Essential for efficient processing of 16S rRNA. May be needed both before and after RbfA during the maturation of 16S rRNA. It has affinity for free ribosomal 30S subunits but not for 70S ribosomes. In Bartonella henselae (strain ATCC 49882 / DSM 28221 / CCUG 30454 / Houston 1) (Rochalimaea henselae), this protein is Ribosome maturation factor RimM.